We begin with the raw amino-acid sequence, 1179 residues long: Integrin alpha-7 (1179 aa).

The signal sequence occupies residues 1–33 (MARIPRCDFLRPPGIYYLITSLLAGLFLPPAIA). Residues 34 to 1076 (FNLDVMGAIR…YLDPMAVVVE (1043 aa)) are Extracellular-facing. FG-GAP repeat units lie at residues 38-103 (VMGA…ETDC), 110-175 (RGAN…IRDE), 185-238 (EGRP…SPDL), 292-349 (DRLT…ATRL), 350-411 (IPEV…HWAD), 412-467 (ISPL…GVVV), and 471-530 (QVLE…IDPR). N86 carries an N-linked (GlcNAc...) asparagine glycan. 3 disulfides stabilise this stretch: C94–C103, C140–C163, and C184–C197. The Ca(2+) site is built by D372, N374, D376, D380, D434, N436, D438, D442, D492, D494, N496, Y498, and D500. Disulfide bonds link C539–C546, C552–C615, C681–C687, C781–C792, C939–C993, and C999–C1004. N-linked (GlcNAc...) asparagine glycosylation occurs at N784. A compositionally biased stretch (basic and acidic residues) spans 952 to 961 (SRDRRRRELG). Residues 952 to 978 (SRDRRRRELGQPEPQEPPEKVEPSTSW) are disordered. N988 carries N-linked (GlcNAc...) asparagine glycosylation. N-linked (GlcNAc...) asparagine glycosylation is found at N1023 and N1043. The helical transmembrane segment at 1077–1102 (GVPWWVILLGVLAGLLVLALLVLLLW) threads the bilayer. At 1103–1179 (KLGFFKRAKH…PDGHPVPATA (77 aa)) the chain is on the cytoplasmic side. The GFFKR motif signature appears at 1105–1109 (GFFKR). The interval 1134-1153 (KEEKTGTIQRSNWGNSQWEG) is disordered. Polar residues predominate over residues 1139–1152 (GTIQRSNWGNSQWE). Repeat copies occupy residues 1155–1158 (DAHP), 1163–1166 (DWHP), and 1171–1174 (DGHP). The interval 1155–1174 (DAHPILAADWHPELGPDGHP) is 3 X 4 AA repeats of D-X-H-P.

Belongs to the integrin alpha chain family. In terms of assembly, heterodimer of an alpha and a beta subunit. The alpha subunit is composed of a heavy and a light chain linked by a disulfide bond. Alpha-7 associates with beta-1. Interacts with COMP. Interacts (via C-terminus intracellular tail region) with CIB1; the interaction is stabilized/increased in a calcium- and magnesium-dependent manner. Post-translationally, ADP-ribosylated on at least two sites of the extracellular domain in skeletal myotubes (in vitro). In terms of processing, no proteolytic cleavage to produce the 70 kDa form is seen due to the presence of a Gly instead of an arginine residue at position 647. In terms of tissue distribution, isoforms containing segment X2 are found in adult heart, lung and skeletal muscle. Isoforms containing segment X1 are expressed in adult heart, lung and in proliferating skeletal myoblasts but not in adult skeletal muscle. Isoforms containing segment a are exclusively found in skeletal muscle. Isoforms containing segment B are widely expressed. In muscle fibers isoforms containing segment A and B are expressed at myotendinous and neuromuscular junctions; isoforms containing segment C are expressed at neuromuscular junctions and at extrasynaptic sites.

The protein localises to the membrane. Functionally, integrin alpha-7/beta-1 is the primary laminin receptor on skeletal myoblasts and adult myofibers. During myogenic differentiation, it may induce changes in the shape and mobility of myoblasts, and facilitate their localization at laminin-rich sites of secondary fiber formation. Involved in the maintenance of the myofibers cytoarchitecture as well as for their anchorage, viability and functional integrity. Mice carrying a ITGA7 null allele are viable and fertile, but show progressive muscular dystrophy starting soon after birth, but with a distinct variability in different muscle types. Required to promote contractile phenotype acquisition in differentiated airway smooth muscle (ASM) cells. Acts as a Schwann cell receptor for laminin-2. Acts as a receptor of COMP and mediates its effect on vascular smooth muscle cells (VSMCs) maturation. This is Integrin alpha-7 (Itga7) from Mus musculus (Mouse).